Here is a 94-residue protein sequence, read N- to C-terminus: MLKLNLQFFASKKGVSSTKNGRDSESKRLGAKRADGQFVTGGSILFRQRGTKIYAGENVGRGGDDTLFAKIDGVVKFERKGRDKKQVSVYAVAE.

Residues 1-9 constitute a propeptide that is removed on maturation; the sequence is MLKLNLQFF. Residues 12-32 form a disordered region; sequence KKGVSSTKNGRDSESKRLGAK. Over residues 20–32 the composition is skewed to basic and acidic residues; it reads NGRDSESKRLGAK.

The protein belongs to the bacterial ribosomal protein bL27 family. In terms of processing, the N-terminus is cleaved by ribosomal processing cysteine protease Prp.

This Staphylococcus carnosus (strain TM300) protein is Large ribosomal subunit protein bL27.